Reading from the N-terminus, the 187-residue chain is MENQEKVEQAVYQLLEALGENPEREGLLDTPKRVAKMYAEMFSGLNEDPKDQFTAVFSEVHDEVVLVKDIPFYSMCEHHLVPFYGMAHVAYLPSGDKVTGLSKLARAVEVAARRPQLQERLTDQVATALEEALNPRGVFVMVEAEHMCMTMRGIKKPGSKTITTVAKGIYKEDREERKEILSLMRDF.

Positions 76, 79, and 148 each coordinate Zn(2+).

This sequence belongs to the GTP cyclohydrolase I family. As to quaternary structure, toroid-shaped homodecamer, composed of two pentamers of five dimers.

It catalyses the reaction GTP + H2O = 7,8-dihydroneopterin 3'-triphosphate + formate + H(+). It participates in cofactor biosynthesis; 7,8-dihydroneopterin triphosphate biosynthesis; 7,8-dihydroneopterin triphosphate from GTP: step 1/1. The polypeptide is GTP cyclohydrolase 1 (Streptococcus thermophilus (strain CNRZ 1066)).